The following is a 533-amino-acid chain: Flavin-containing monooxygenase 5 (533 aa).

Dimethylated arginine is present on Arg5. Residues 10 to 14 (GAGAS), Glu33, and 41 to 42 (LW) contribute to the FAD site. The residue at position 54 (Ser54) is a Phosphoserine. Tyr56 is subject to Phosphotyrosine. Residue Ser58 is modified to Phosphoserine. 62 to 63 (NT) contacts FAD. An NADP(+)-binding site is contributed by 196–199 (SGGD). Ser280 carries the phosphoserine modification. The residue at position 284 (Thr284) is a Phosphothreonine. Ser401 is modified (phosphoserine). Residues 513 to 533 (LVTVRVLMLAVAFFAVILAYF) form a helical membrane-spanning segment.

The protein belongs to the FMO family. The cofactor is FAD. Expressed in liver (at protein level). Expressed in the mucosal epithelium of the gastrointestinal tract.

The protein resides in the microsome membrane. The protein localises to the endoplasmic reticulum membrane. The enzyme catalyses N,N-dimethylaniline + NADPH + O2 + H(+) = N,N-dimethylaniline N-oxide + NADP(+) + H2O. It carries out the reaction NADPH + O2 + H(+) = H2O2 + NADP(+). The catalysed reaction is heptan-2-one + NADPH + O2 + H(+) = pentyl acetate + NADP(+) + H2O. It catalyses the reaction octan-3-one + NADPH + O2 + H(+) = pentyl propanoate + NADP(+) + H2O. The enzyme catalyses octan-3-one + NADPH + O2 + H(+) = ethyl hexanoate + NADP(+) + H2O. It carries out the reaction hexan-3-one + NADPH + O2 + H(+) = ethyl butanoate + NADP(+) + H2O. The catalysed reaction is hexan-3-one + NADPH + O2 + H(+) = propyl propanoate + NADP(+) + H2O. It catalyses the reaction heptan-4-one + NADPH + O2 + H(+) = propyl butanoate + NADP(+) + H2O. The enzyme catalyses (2E)-geranial + NADPH + O2 + H(+) = (1E)-2,6-dimethylhepta-1,5-dien-1-yl formate + NADP(+) + H2O. It carries out the reaction sulcatone + NADPH + O2 + H(+) = 4-methylpent-3-en-1-yl acetate + NADP(+) + H2O. Its function is as follows. Acts as a Baeyer-Villiger monooxygenase on a broad range of substrates. Catalyzes the insertion of an oxygen atom into a carbon-carbon bond adjacent to a carbonyl, which converts ketones to esters. Active on diverse carbonyl compounds, whereas soft nucleophiles are mostly non- or poorly reactive. In contrast with other forms of FMO it is non- or poorly active on 'classical' substrates such as drugs, pesticides, and dietary components containing soft nucleophilic heteroatoms. Able to oxidize drug molecules bearing a carbonyl group on an aliphatic chain, such as nabumetone and pentoxifylline. Also, in the absence of substrates, shows slow but yet significant NADPH oxidase activity. Acts as a positive modulator of cholesterol biosynthesis as well as glucose homeostasis, promoting metabolic aging via pleiotropic effects. This chain is Flavin-containing monooxygenase 5, found in Mus musculus (Mouse).